The sequence spans 262 residues: tRNA pseudouridine synthase A (262 aa).

The active-site Nucleophile is the aspartate 54. Residue tyrosine 113 coordinates substrate.

The protein belongs to the tRNA pseudouridine synthase TruA family. In terms of assembly, homodimer.

It catalyses the reaction uridine(38/39/40) in tRNA = pseudouridine(38/39/40) in tRNA. Formation of pseudouridine at positions 38, 39 and 40 in the anticodon stem and loop of transfer RNAs. This Lactobacillus delbrueckii subsp. bulgaricus (strain ATCC BAA-365 / Lb-18) protein is tRNA pseudouridine synthase A.